Consider the following 557-residue polypeptide: Dihydroxy-acid dehydratase (557 aa).

Mg(2+) is bound at residue D78. C119 is a binding site for [2Fe-2S] cluster. Positions 120 and 121 each coordinate Mg(2+). K121 is subject to N6-carboxylysine. A [2Fe-2S] cluster-binding site is contributed by C192. E443 contacts Mg(2+). The active-site Proton acceptor is the S469.

It belongs to the IlvD/Edd family. In terms of assembly, homodimer. It depends on [2Fe-2S] cluster as a cofactor. Mg(2+) is required as a cofactor.

It catalyses the reaction (2R)-2,3-dihydroxy-3-methylbutanoate = 3-methyl-2-oxobutanoate + H2O. The enzyme catalyses (2R,3R)-2,3-dihydroxy-3-methylpentanoate = (S)-3-methyl-2-oxopentanoate + H2O. The protein operates within amino-acid biosynthesis; L-isoleucine biosynthesis; L-isoleucine from 2-oxobutanoate: step 3/4. It participates in amino-acid biosynthesis; L-valine biosynthesis; L-valine from pyruvate: step 3/4. Functions in the biosynthesis of branched-chain amino acids. Catalyzes the dehydration of (2R,3R)-2,3-dihydroxy-3-methylpentanoate (2,3-dihydroxy-3-methylvalerate) into 2-oxo-3-methylpentanoate (2-oxo-3-methylvalerate) and of (2R)-2,3-dihydroxy-3-methylbutanoate (2,3-dihydroxyisovalerate) into 2-oxo-3-methylbutanoate (2-oxoisovalerate), the penultimate precursor to L-isoleucine and L-valine, respectively. The chain is Dihydroxy-acid dehydratase from Persephonella marina (strain DSM 14350 / EX-H1).